The sequence spans 149 residues: Large ribosomal subunit protein uL13 (149 aa).

It belongs to the universal ribosomal protein uL13 family. Part of the 50S ribosomal subunit.

In terms of biological role, this protein is one of the early assembly proteins of the 50S ribosomal subunit, although it is not seen to bind rRNA by itself. It is important during the early stages of 50S assembly. The sequence is that of Large ribosomal subunit protein uL13 from Bifidobacterium longum (strain DJO10A).